The sequence spans 70 residues: Large ribosomal subunit protein bL28c (70 aa).

The protein belongs to the bacterial ribosomal protein bL28 family.

The protein localises to the plastid. The protein resides in the cyanelle. The protein is Large ribosomal subunit protein bL28c (rpl28) of Cyanophora paradoxa.